A 126-amino-acid chain; its full sequence is Desulfoferrodoxin (126 aa).

Cysteine 10, cysteine 13, cysteine 29, cysteine 30, histidine 49, histidine 69, histidine 75, cysteine 116, and histidine 119 together coordinate Fe cation.

It belongs to the desulfoferrodoxin family. As to quaternary structure, homodimer. Requires Fe(3+) as cofactor. The cofactor is Cu(2+).

The enzyme catalyses reduced [rubredoxin] + superoxide + 2 H(+) = oxidized [rubredoxin] + H2O2. Its function is as follows. Catalyzes the one-electron reduction of superoxide anion radical to hydrogen peroxide at a nonheme ferrous iron center. Plays a fundamental role in case of oxidative stress via its superoxide detoxification activity. The polypeptide is Desulfoferrodoxin (dfx) (Syntrophotalea carbinolica (strain DSM 2380 / NBRC 103641 / GraBd1) (Pelobacter carbinolicus)).